The following is a 324-amino-acid chain: Acetyl-coenzyme A carboxylase carboxyl transferase subunit alpha (324 aa).

One can recognise a CoA carboxyltransferase C-terminal domain in the interval 37-291 (KLDKRLDRLK…QEYVLQEWVK (255 aa)).

It belongs to the AccA family. Acetyl-CoA carboxylase is a heterohexamer composed of biotin carboxyl carrier protein (AccB), biotin carboxylase (AccC) and two subunits each of ACCase subunit alpha (AccA) and ACCase subunit beta (AccD).

The protein localises to the cytoplasm. The enzyme catalyses N(6)-carboxybiotinyl-L-lysyl-[protein] + acetyl-CoA = N(6)-biotinyl-L-lysyl-[protein] + malonyl-CoA. Its pathway is lipid metabolism; malonyl-CoA biosynthesis; malonyl-CoA from acetyl-CoA: step 1/1. Component of the acetyl coenzyme A carboxylase (ACC) complex. First, biotin carboxylase catalyzes the carboxylation of biotin on its carrier protein (BCCP) and then the CO(2) group is transferred by the carboxyltransferase to acetyl-CoA to form malonyl-CoA. In Chlamydia trachomatis serovar L2 (strain ATCC VR-902B / DSM 19102 / 434/Bu), this protein is Acetyl-coenzyme A carboxylase carboxyl transferase subunit alpha.